The chain runs to 646 residues: Exoribonuclease 2 (646 aa).

The RNB domain maps to 191-518; sequence RIDLTALDFV…NHRLLKAIIQ (328 aa). The region spanning 563–645 is the S1 motif domain; that stretch reads DKTFSAEIVD…ETRNIVARPV (83 aa).

The protein belongs to the RNR ribonuclease family. RNase II subfamily.

The protein localises to the cytoplasm. The enzyme catalyses Exonucleolytic cleavage in the 3'- to 5'-direction to yield nucleoside 5'-phosphates.. In terms of biological role, involved in mRNA degradation. Hydrolyzes single-stranded polyribonucleotides processively in the 3' to 5' direction. This is Exoribonuclease 2 from Xenorhabdus bovienii (strain SS-2004) (Xenorhabdus nematophila subsp. bovienii).